The primary structure comprises 592 residues: Aspartate--tRNA ligase (592 aa).

Residue glutamate 171 coordinates L-aspartate. Residues 195–198 form an aspartate region; sequence QLFK. Arginine 217 lines the L-aspartate pocket. Residues 217–219 and glutamine 226 contribute to the ATP site; that span reads RDE. L-aspartate is bound at residue histidine 448. Glutamate 482 serves as a coordination point for ATP. Arginine 489 provides a ligand contact to L-aspartate. 534–537 is an ATP binding site; sequence GLDR.

This sequence belongs to the class-II aminoacyl-tRNA synthetase family. Type 1 subfamily. Homodimer.

It is found in the cytoplasm. The catalysed reaction is tRNA(Asp) + L-aspartate + ATP = L-aspartyl-tRNA(Asp) + AMP + diphosphate. Its function is as follows. Catalyzes the attachment of L-aspartate to tRNA(Asp) in a two-step reaction: L-aspartate is first activated by ATP to form Asp-AMP and then transferred to the acceptor end of tRNA(Asp). The sequence is that of Aspartate--tRNA ligase from Vibrio parahaemolyticus serotype O3:K6 (strain RIMD 2210633).